The chain runs to 309 residues: Peptidyl-prolyl cis-trans isomerase 9 (309 aa).

Residues 8-173 (FLDISVDENL…AKVLISNCGE (166 aa)) form the PPIase cyclophilin-type domain. 4 stretches are compositionally biased toward basic and acidic residues: residues 217–229 (NEKK…DKRR), 239–265 (RSHE…RDEN), 280–289 (ERSATPEHWR), and 296–309 (WVHD…EDLV). The disordered stretch occupies residues 217–309 (NEKKHEMRND…SHKHPEEDLV (93 aa)).

Belongs to the cyclophilin-type PPIase family. Co-expressed with pdi-1 in the syncytial hypodermis.

The enzyme catalyses [protein]-peptidylproline (omega=180) = [protein]-peptidylproline (omega=0). Functionally, PPIases accelerate the folding of proteins. It catalyzes the cis-trans isomerization of proline imidic peptide bonds in oligopeptides. Thought to function as a catalyst in the folding and modification of cuticle collagens. This Caenorhabditis elegans protein is Peptidyl-prolyl cis-trans isomerase 9 (cyn-9).